We begin with the raw amino-acid sequence, 103 residues long: Large ribosomal subunit protein bL21 (103 aa).

It belongs to the bacterial ribosomal protein bL21 family. Part of the 50S ribosomal subunit. Contacts protein L20.

Its function is as follows. This protein binds to 23S rRNA in the presence of protein L20. In Polynucleobacter asymbioticus (strain DSM 18221 / CIP 109841 / QLW-P1DMWA-1) (Polynucleobacter necessarius subsp. asymbioticus), this protein is Large ribosomal subunit protein bL21.